The following is a 463-amino-acid chain: Hexokinase-7 (463 aa).

Positions alanine 7 to alanine 456 constitute a Hexokinase domain. Residues asparagine 62–isoleucine 199 form a hexokinase small subdomain region. Residues glycine 76, threonine 77, and asparagine 78 each coordinate ADP. Positions 165, 166, 200, and 201 each coordinate D-glucose. A hexokinase large subdomain region spans residues asparagine 200–aspartate 445. Threonine 224 is an ADP binding site. D-glucose-binding residues include asparagine 227, glutamate 255, and glutamate 286. Glycine 410 contacts ADP.

The protein belongs to the hexokinase family. Expressed in roots, leaves, flowers, immature seeds and seed coat.

Its subcellular location is the cytoplasm. The enzyme catalyses a D-hexose + ATP = a D-hexose 6-phosphate + ADP + H(+). It carries out the reaction D-fructose + ATP = D-fructose 6-phosphate + ADP + H(+). It catalyses the reaction D-glucose + ATP = D-glucose 6-phosphate + ADP + H(+). It functions in the pathway carbohydrate metabolism; hexose metabolism. It participates in carbohydrate degradation; glycolysis; D-glyceraldehyde 3-phosphate and glycerone phosphate from D-glucose: step 1/4. Its function is as follows. Fructose and glucose phosphorylating enzyme. Functions in sugar signaling via a glycolysis-dependent manner under aerobic conditions, but its signaling role is suppressed when oxygen is deficient. In Oryza sativa subsp. japonica (Rice), this protein is Hexokinase-7 (HXK7).